A 313-amino-acid chain; its full sequence is Olfactory receptor 8C8 (313 aa).

At 1-27 the chain is on the extracellular side; the sequence is MMQITMENKSSVSEFILMGLTDQPELQ. N-linked (GlcNAc...) asparagine glycosylation occurs at Asn8. Residues 28–48 traverse the membrane as a helical segment; that stretch reads LPLFVLFLMNYTATVMGNLTL. Over 49–59 the chain is Cytoplasmic; sequence MNLICLNSNLH. Residues 60–80 traverse the membrane as a helical segment; it reads TPMYFFLFNLSFIDFCYSMVF. Over 81–96 the chain is Extracellular; it reads TPKMLMSFILEKNTIS. A helical transmembrane segment spans residues 97 to 117; that stretch reads FGGCMAQLFFFLFFVNSESYV. Residues Cys100 and Cys192 are joined by a disulfide bond. Topologically, residues 118–136 are cytoplasmic; sequence LTAMAYDRYVAICKPLTYK. Residues 137 to 157 form a helical membrane-spanning segment; that stretch reads VIMSPKICCLLIFSSYLMGFA. The Extracellular segment spans residues 158–208; it reads SAMAHTGCMIRLSFCDSNIINHYMCDIFPLLPLSCSSTYVNELMSSVVVGS. A helical membrane pass occupies residues 209–229; that stretch reads AIILCCLIILISYAMILFNII. At 230 to 239 the chain is on the cytoplasmic side; sequence HMSSGKGWSK. A helical transmembrane segment spans residues 240 to 260; sequence ALGTCGSHIITVSLFYGSGLL. The Extracellular portion of the chain corresponds to 261–274; it reads AYVKPSSAKTVGQG. Residues 275–295 traverse the membrane as a helical segment; the sequence is KFFSVFYTLLVPMLNPLIYSL. Over 296–313 the chain is Cytoplasmic; sequence RNKDVKLAVKKTWKRITS.

This sequence belongs to the G-protein coupled receptor 1 family. As to expression, expressed in neurons in the olfactory epithelium.

It is found in the cell membrane. Potential odorant receptor. In Mus musculus (Mouse), this protein is Olfactory receptor 8C8.